A 273-amino-acid chain; its full sequence is NH(3)-dependent NAD(+) synthetase (273 aa).

47 to 54 (GISGGQDS) serves as a coordination point for ATP. A Mg(2+)-binding site is contributed by aspartate 53. Deamido-NAD(+) is bound at residue arginine 139. Threonine 159 serves as a coordination point for ATP. Glutamate 164 contacts Mg(2+). Deamido-NAD(+) contacts are provided by lysine 172 and aspartate 179. ATP is bound by residues lysine 188 and threonine 210. A deamido-NAD(+)-binding site is contributed by 259–260 (HK).

This sequence belongs to the NAD synthetase family. Homodimer.

It catalyses the reaction deamido-NAD(+) + NH4(+) + ATP = AMP + diphosphate + NAD(+) + H(+). Its pathway is cofactor biosynthesis; NAD(+) biosynthesis; NAD(+) from deamido-NAD(+) (ammonia route): step 1/1. Functionally, catalyzes the ATP-dependent amidation of deamido-NAD to form NAD. Uses ammonia as a nitrogen source. The protein is NH(3)-dependent NAD(+) synthetase of Staphylococcus aureus (strain bovine RF122 / ET3-1).